The primary structure comprises 212 residues: Urease accessory protein UreG (212 aa).

19–26 (GPVGSGKT) lines the GTP pocket.

Belongs to the SIMIBI class G3E GTPase family. UreG subfamily. As to quaternary structure, homodimer. UreD, UreF and UreG form a complex that acts as a GTP-hydrolysis-dependent molecular chaperone, activating the urease apoprotein by helping to assemble the nickel containing metallocenter of UreC. The UreE protein probably delivers the nickel.

The protein resides in the cytoplasm. Its function is as follows. Facilitates the functional incorporation of the urease nickel metallocenter. This process requires GTP hydrolysis, probably effectuated by UreG. This Vibrio parahaemolyticus protein is Urease accessory protein UreG.